We begin with the raw amino-acid sequence, 336 residues long: Serpentine receptor class alpha-10 (336 aa).

The Extracellular portion of the chain corresponds to 1-28; the sequence is MGPITANSSKCATEDQMILQTSLLLRIN. Residues 29–49 form a helical membrane-spanning segment; that stretch reads VIIMTIVAIITFILTYKALFI. Over 50-61 the chain is Cytoplasmic; sequence LKIRPIFHSSTK. Residues 62–82 traverse the membrane as a helical segment; it reads ILLYTSLLFVNVHAVIFMVIQ. Over 83-107 the chain is Extracellular; sequence NTALIRSFTLSDKPCEIMRTTLECR. Residues 108-128 traverse the membrane as a helical segment; that stretch reads FQNHVLIFGIAGVNFNQFGLT. Over 129-148 the chain is Cytoplasmic; it reads VDRLLATIIPQSYSHMGALP. A helical membrane pass occupies residues 149–169; sequence GVILSVLVVACSIAAPLIIAI. Residues 170–192 lie on the Extracellular side of the membrane; it reads GDPYDDIVPNCFFFPEHSAPRAN. The helical transmembrane segment at 193–213 threads the bilayer; the sequence is IFLVTLSTLVITSIFLNFIII. Residues 214–243 lie on the Cytoplasmic side of the membrane; the sequence is YANKKLEKGCRTRFYVTQRYQKREALISTR. Residues 244-264 form a helical membrane-spanning segment; it reads IISYIAASQFLGLTLYSTMVL. At 265 to 280 the chain is on the extracellular side; sequence TLRLHKSMIPISIYHN. Residues 281–301 traverse the membrane as a helical segment; sequence MVWWAYTVPFAAVSLPALLIY. Residues 302–336 are Cytoplasmic-facing; that stretch reads RINQVGSNRKRVINRITAKVETQEEHMKSLKELWA.

Belongs to the nematode receptor-like protein sra family. As to expression, expressed in the URX sensory neuron, the ALA interneuron and in additional interneurons, pharyngeal neurons and muscle.

Its subcellular location is the membrane. This is Serpentine receptor class alpha-10 (sra-10) from Caenorhabditis elegans.